A 195-amino-acid chain; its full sequence is Sec-independent protein translocase protein TatB (195 aa).

The helical transmembrane segment at M1–G21 threads the bilayer. Positions D166 to S195 are disordered. The span at P183–S195 shows a compositional bias: polar residues.

The protein belongs to the TatB family. In terms of assembly, the Tat system comprises two distinct complexes: a TatABC complex, containing multiple copies of TatA, TatB and TatC subunits, and a separate TatA complex, containing only TatA subunits. Substrates initially bind to the TatABC complex, which probably triggers association of the separate TatA complex to form the active translocon.

The protein resides in the cell inner membrane. Functionally, part of the twin-arginine translocation (Tat) system that transports large folded proteins containing a characteristic twin-arginine motif in their signal peptide across membranes. Together with TatC, TatB is part of a receptor directly interacting with Tat signal peptides. TatB may form an oligomeric binding site that transiently accommodates folded Tat precursor proteins before their translocation. The polypeptide is Sec-independent protein translocase protein TatB (Actinobacillus pleuropneumoniae serotype 5b (strain L20)).